The following is a 335-amino-acid chain: Lipoyl synthase (335 aa).

7 residues coordinate [4Fe-4S] cluster: cysteine 55, cysteine 60, cysteine 66, cysteine 81, cysteine 85, cysteine 88, and serine 292. Residues tryptophan 67 to leucine 281 form the Radical SAM core domain.

This sequence belongs to the radical SAM superfamily. Lipoyl synthase family. [4Fe-4S] cluster serves as cofactor.

The protein resides in the cytoplasm. The catalysed reaction is [[Fe-S] cluster scaffold protein carrying a second [4Fe-4S](2+) cluster] + N(6)-octanoyl-L-lysyl-[protein] + 2 oxidized [2Fe-2S]-[ferredoxin] + 2 S-adenosyl-L-methionine + 4 H(+) = [[Fe-S] cluster scaffold protein] + N(6)-[(R)-dihydrolipoyl]-L-lysyl-[protein] + 4 Fe(3+) + 2 hydrogen sulfide + 2 5'-deoxyadenosine + 2 L-methionine + 2 reduced [2Fe-2S]-[ferredoxin]. It functions in the pathway protein modification; protein lipoylation via endogenous pathway; protein N(6)-(lipoyl)lysine from octanoyl-[acyl-carrier-protein]: step 2/2. Functionally, catalyzes the radical-mediated insertion of two sulfur atoms into the C-6 and C-8 positions of the octanoyl moiety bound to the lipoyl domains of lipoate-dependent enzymes, thereby converting the octanoylated domains into lipoylated derivatives. The chain is Lipoyl synthase from Kocuria rhizophila (strain ATCC 9341 / DSM 348 / NBRC 103217 / DC2201).